Consider the following 456-residue polypeptide: UDP-N-acetylmuramate--L-alanine ligase (456 aa).

112-118 (GTHGKTT) contacts ATP.

Belongs to the MurCDEF family.

The protein localises to the cytoplasm. The enzyme catalyses UDP-N-acetyl-alpha-D-muramate + L-alanine + ATP = UDP-N-acetyl-alpha-D-muramoyl-L-alanine + ADP + phosphate + H(+). Its pathway is cell wall biogenesis; peptidoglycan biosynthesis. Cell wall formation. The chain is UDP-N-acetylmuramate--L-alanine ligase from Trichlorobacter lovleyi (strain ATCC BAA-1151 / DSM 17278 / SZ) (Geobacter lovleyi).